A 192-amino-acid chain; its full sequence is Holliday junction branch migration complex subunit RuvA (192 aa).

Residues 1–64 are domain I; that stretch reads MIGRLTGILA…EDGHYLYGFL (64 aa). The interval 65 to 143 is domain II; the sequence is TEAERFAFRQ…DATGVSLHPA (79 aa). The flexible linker stretch occupies residues 144–149; sequence VDDSKQ. Residues 149 to 192 form a domain III region; it reads QDISNALLALGYNEKEAASAMKQLPADVSTSDGIRAALKLLSKV.

Belongs to the RuvA family. In terms of assembly, homotetramer. Forms an RuvA(8)-RuvB(12)-Holliday junction (HJ) complex. HJ DNA is sandwiched between 2 RuvA tetramers; dsDNA enters through RuvA and exits via RuvB. An RuvB hexamer assembles on each DNA strand where it exits the tetramer. Each RuvB hexamer is contacted by two RuvA subunits (via domain III) on 2 adjacent RuvB subunits; this complex drives branch migration. In the full resolvosome a probable DNA-RuvA(4)-RuvB(12)-RuvC(2) complex forms which resolves the HJ.

It localises to the cytoplasm. The RuvA-RuvB-RuvC complex processes Holliday junction (HJ) DNA during genetic recombination and DNA repair, while the RuvA-RuvB complex plays an important role in the rescue of blocked DNA replication forks via replication fork reversal (RFR). RuvA specifically binds to HJ cruciform DNA, conferring on it an open structure. The RuvB hexamer acts as an ATP-dependent pump, pulling dsDNA into and through the RuvAB complex. HJ branch migration allows RuvC to scan DNA until it finds its consensus sequence, where it cleaves and resolves the cruciform DNA. The polypeptide is Holliday junction branch migration complex subunit RuvA (Dechloromonas aromatica (strain RCB)).